A 387-amino-acid chain; its full sequence is Eukaryotic translation initiation factor 3 subunit M (387 aa).

The 160-residue stretch at 181 to 340 (LSSKVMIELL…HKVHITSTMH (160 aa)) folds into the PCI domain.

Belongs to the eIF-3 subunit M family. As to quaternary structure, component of the eukaryotic translation initiation factor 3 (eIF-3) complex. The eIF-3 complex interacts with pix.

It localises to the cytoplasm. The protein localises to the golgi apparatus. Component of the eukaryotic translation initiation factor 3 (eIF-3) complex, which is involved in protein synthesis of a specialized repertoire of mRNAs and, together with other initiation factors, stimulates binding of mRNA and methionyl-tRNAi to the 40S ribosome. The eIF-3 complex specifically targets and initiates translation of a subset of mRNAs involved in cell proliferation. This chain is Eukaryotic translation initiation factor 3 subunit M, found in Drosophila erecta (Fruit fly).